The sequence spans 273 residues: ATP synthase subunit delta (273 aa).

The segment at 55–78 (TDPAQSARPRPSSPSVSSAPRSAA) is disordered. Residues 57 to 78 (PAQSARPRPSSPSVSSAPRSAA) are compositionally biased toward low complexity.

Belongs to the ATPase delta chain family. In terms of assembly, F-type ATPases have 2 components, F(1) - the catalytic core - and F(0) - the membrane proton channel. F(1) has five subunits: alpha(3), beta(3), gamma(1), delta(1), epsilon(1). F(0) has three main subunits: a(1), b(2) and c(10-14). The alpha and beta chains form an alternating ring which encloses part of the gamma chain. F(1) is attached to F(0) by a central stalk formed by the gamma and epsilon chains, while a peripheral stalk is formed by the delta and b chains.

The protein resides in the cell membrane. Its function is as follows. F(1)F(0) ATP synthase produces ATP from ADP in the presence of a proton or sodium gradient. F-type ATPases consist of two structural domains, F(1) containing the extramembraneous catalytic core and F(0) containing the membrane proton channel, linked together by a central stalk and a peripheral stalk. During catalysis, ATP synthesis in the catalytic domain of F(1) is coupled via a rotary mechanism of the central stalk subunits to proton translocation. In terms of biological role, this protein is part of the stalk that links CF(0) to CF(1). It either transmits conformational changes from CF(0) to CF(1) or is implicated in proton conduction. This chain is ATP synthase subunit delta, found in Streptomyces lividans.